An 859-amino-acid chain; its full sequence is Leucine--tRNA ligase (859 aa).

The short motif at 42 to 52 (PYPSGRLHMGH) is the 'HIGH' region element. The short motif at 618-622 (KMSKS) is the 'KMSKS' region element. Lys-621 is a binding site for ATP.

The protein belongs to the class-I aminoacyl-tRNA synthetase family.

It localises to the cytoplasm. It carries out the reaction tRNA(Leu) + L-leucine + ATP = L-leucyl-tRNA(Leu) + AMP + diphosphate. This is Leucine--tRNA ligase from Shewanella sp. (strain W3-18-1).